Reading from the N-terminus, the 114-residue chain is Putative ANKRD40 C-terminal-like protein (114 aa).

This chain is Putative ANKRD40 C-terminal-like protein, found in Homo sapiens (Human).